Here is a 983-residue protein sequence, read N- to C-terminus: Bifunctional glutamine synthetase adenylyltransferase/adenylyl-removing enzyme (983 aa).

Residues 1-468 (MTVENAKALF…KQYAALFEQA (468 aa)) form an adenylyl removase region. The adenylyl transferase stretch occupies residues 473–983 (AASGNLVFTG…FDKLVGHGAD (511 aa)).

Belongs to the GlnE family. Requires Mg(2+) as cofactor.

The enzyme catalyses [glutamine synthetase]-O(4)-(5'-adenylyl)-L-tyrosine + phosphate = [glutamine synthetase]-L-tyrosine + ADP. It carries out the reaction [glutamine synthetase]-L-tyrosine + ATP = [glutamine synthetase]-O(4)-(5'-adenylyl)-L-tyrosine + diphosphate. In terms of biological role, involved in the regulation of glutamine synthetase GlnA, a key enzyme in the process to assimilate ammonia. When cellular nitrogen levels are high, the C-terminal adenylyl transferase (AT) inactivates GlnA by covalent transfer of an adenylyl group from ATP to specific tyrosine residue of GlnA, thus reducing its activity. Conversely, when nitrogen levels are low, the N-terminal adenylyl removase (AR) activates GlnA by removing the adenylyl group by phosphorolysis, increasing its activity. The regulatory region of GlnE binds the signal transduction protein PII (GlnB) which indicates the nitrogen status of the cell. The polypeptide is Bifunctional glutamine synthetase adenylyltransferase/adenylyl-removing enzyme (Brucella melitensis biotype 1 (strain ATCC 23456 / CCUG 17765 / NCTC 10094 / 16M)).